A 274-amino-acid chain; its full sequence is Outer surface protein A (274 aa).

The N-terminal stretch at 1–16 (MKKYLLGIGLILALIA) is a signal peptide. The N-palmitoyl cysteine moiety is linked to residue Cys-17. Cys-17 is lipidated: S-diacylglycerol cysteine.

This sequence belongs to the OspA lipoprotein family.

The protein localises to the cell outer membrane. Its subcellular location is the cell surface. In Borreliella burgdorferi (Lyme disease spirochete), this protein is Outer surface protein A.